The sequence spans 285 residues: MKVDVGPDPSLVYRPDVDPEMAKSKDSFRNYTSGPLLDRVFTTYKLMHTHQTVDFVSRKRIQYGSFSYKKMTIMEAVGMLDDLVDESDPDVDFPNSFHAFQTAEGIRKAHPDKDWFHLVGLLHDLGKIMALWGEPQWAVVGDTFPVGCRPQASVVFCDSTFQDNPDLQDPRYSTELGMYQPHCGLENVLMSWGHDEYLYQMMKFNKFSLPSEAFYMIRFHSFYPWHTGGDYRQLCSQQDLDMLPWVQEFNKFDLYTKCPDLPDVESLRPYYQGLIDKYCPGTLSW.

R29 contacts substrate. At S33 the chain carries Phosphoserine. 85–88 (DESD) is a binding site for substrate. 3 residues coordinate Fe cation: H98, H123, and D124. Residues K127 and 141 to 142 (GD) each bind substrate. Residues H194, H220, and D253 each coordinate Fe cation. 220-221 (HS) serves as a coordination point for substrate.

It belongs to the myo-inositol oxygenase family. It depends on Fe cation as a cofactor. As to expression, kidney specific. Renal proximal tubules.

The protein resides in the cytoplasm. The enzyme catalyses myo-inositol + O2 = D-glucuronate + H2O + H(+). It functions in the pathway polyol metabolism; myo-inositol degradation into D-glucuronate; D-glucuronate from myo-inositol: step 1/1. This chain is Inositol oxygenase (Miox), found in Mus musculus (Mouse).